The sequence spans 127 residues: Large ribosomal subunit protein bL20 (127 aa).

It belongs to the bacterial ribosomal protein bL20 family.

Binds directly to 23S ribosomal RNA and is necessary for the in vitro assembly process of the 50S ribosomal subunit. It is not involved in the protein synthesizing functions of that subunit. This is Large ribosomal subunit protein bL20 from Bifidobacterium adolescentis (strain ATCC 15703 / DSM 20083 / NCTC 11814 / E194a).